Reading from the N-terminus, the 3005-residue chain is Highly reducing polyketide synthase AFT9-1 (3005 aa).

In terms of domain architecture, Ketosynthase family 3 (KS3) spans 1–337 (MDPQQRLLLE…GTNAHAILER (337 aa)). Active-site for beta-ketoacyl synthase activity residues include C87, H222, and H260. The tract at residues 437–751 (VFTGQGAQWP…SYMSALVRGS (315 aa)) is malonyl-CoA:ACP transacylase (MAT) domain. The tract at residues 821 to 936 (HDLLGLKMTD…GSVEVKYAAA (116 aa)) is N-terminal hotdog fold. The segment at 821-1114 (HDLLGLKMTD…SGLELRRLAP (294 aa)) is dehydratase (DH) domain. The PKS/mFAS DH domain maps to 821–1118 (HDLLGLKMTD…LRRLAPTGQP (298 aa)). Residue H853 is the Proton acceptor; for dehydratase activity of the active site. The C-terminal hotdog fold stretch occupies residues 963 to 1118 (IEKISSQELY…LRRLAPTGQP (156 aa)). D1028 functions as the Proton donor; for dehydratase activity in the catalytic mechanism. The segment at 1259-1445 (ADDSSKRCYD…MRKASLNMQL (187 aa)) is methyltransferase (CMet) domain. Residues 1683-1985 (EFMKMPVFTE…QHHRNESTVL (303 aa)) form an enoyl reductase (ER) (ER) domain region. The ketoreductase (KR) domain stretch occupies residues 2008 to 2191 (ATYVVSGGRG…YMSLNVGTIE (184 aa)). Residues 2293 to 2375 (TRDFEKISQL…SLGAKVASRS (83 aa)) form the Carrier domain. S2335 carries the O-(pantetheine 4'-phosphoryl)serine modification.

It functions in the pathway mycotoxin biosynthesis. Highly reducing polyketide synthase; part of the gene clusters that mediate the biosynthesis of the host-selective toxins (HSTs) AF-toxins responsible for Alternaria black spot of strawberry disease by the strawberry pathotype. AF-toxin I and III are valine derivatives of 2,3-dyhydroxy-isovaleric acid and 2-hydroxy-isovaleric acid respectively, while AF II is an isoleucine derivative of 2-hydroxy-valeric acid. These derivatives are bound to a 9,10-epoxy-8-hydroxy-9-methyl-decatrienoic acid (EDA) moiety. On cellular level, AF-toxins affect plasma membrane of susceptible cells and cause a sudden increase in loss of K(+) after a few minutes of toxin treatment. The aldo-keto reductase AFTS1 catalyzes the conversion of 2-keto-isovaleric acid (2-KIV) to 2-hydroxy-isovaleric acid (2-HIV) by reduction of its ketone to an alcohol. The acyl-CoA ligase AFT1, the hydrolase AFT2 and the enoyl-CoA hydratases AFT3 and AFT6, but also the polyketide synthase AFT9, the acyl-CoA dehydrogenase AFT10, the cytochrome P450 monooxygenase AFT11 and the oxidoreductase AFT12 are all involved in the biosynthesis of the AK-, AF- and ACT-toxin common EDA structural moiety. The exact function of each enzyme, and of additional enzymes identified within the AF-toxin clusters have still to be determined. This is Highly reducing polyketide synthase AFT9-1 from Alternaria alternata (Alternaria rot fungus).